The sequence spans 154 residues: Putative pre-16S rRNA nuclease (154 aa).

This sequence belongs to the YqgF nuclease family.

The protein localises to the cytoplasm. Functionally, could be a nuclease involved in processing of the 5'-end of pre-16S rRNA. In Gluconacetobacter diazotrophicus (strain ATCC 49037 / DSM 5601 / CCUG 37298 / CIP 103539 / LMG 7603 / PAl5), this protein is Putative pre-16S rRNA nuclease.